The following is a 700-amino-acid chain: Chondroitinase-AC (700 aa).

The first 22 residues, 1–22, serve as a signal peptide directing secretion; it reads MKKLFVTCIVFFSILSPALLIA. Residues His-225, Tyr-234, and Arg-288 contribute to the active site. Ser-328 carries an O-linked (Man...) serine glycan. Residues Glu-405, Asp-407, Asp-416, and Tyr-417 each coordinate Ca(2+). O-linked (Man...) serine glycosylation occurs at Ser-455.

It belongs to the polysaccharide lyase 8 family. As to quaternary structure, monomer. The cofactor is Ca(2+).

The enzyme catalyses Eliminative degradation of polysaccharides containing 1,4-beta-D-hexosaminyl and 1,3-beta-D-glucuronosyl linkages to disaccharides containing 4-deoxy-beta-D-gluc-4-enuronosyl groups.. The sequence is that of Chondroitinase-AC (cslA) from Pedobacter heparinus (strain ATCC 13125 / DSM 2366 / CIP 104194 / JCM 7457 / NBRC 12017 / NCIMB 9290 / NRRL B-14731 / HIM 762-3).